Reading from the N-terminus, the 590-residue chain is Pentatricopeptide repeat-containing protein At1g63070, mitochondrial (590 aa).

A mitochondrion-targeting transit peptide spans 1–34; the sequence is MMRSVAVIGKKCLHRHTVLLKGNPRTTLCWERSF. 14 PPR repeats span residues 74-108, 109-143, 144-178, 179-213, 214-248, 249-283, 284-318, 319-353, 355-389, 390-424, 425-459, 460-494, 495-529, and 530-564; these read SIVE…GISH, NLYT…GYGP, SIVT…GYQP, DTVT…GCQP, DLVT…KIEA, DVVI…GIKP, DVFT…NINP, DLVF…KHCF, DVVA…GLVG, NTVT…GVHP, DIMT…DMKL, DIVT…GVKP, NVVT…GPLP, and NSGT…GFAG.

Belongs to the PPR family. P subfamily.

It localises to the mitochondrion. The protein is Pentatricopeptide repeat-containing protein At1g63070, mitochondrial of Arabidopsis thaliana (Mouse-ear cress).